The primary structure comprises 113 residues: Non-structural protein 1 (113 aa).

This sequence belongs to the pneumovirus non-structural protein 1 family.

The protein resides in the host cytoplasm. The protein localises to the host mitochondrion. Its function is as follows. May play a minor role in antagonizing the type I IFN-mediated antiviral response. Additionally, NS1 may serve some inhibitory role in viral transcription and RNA replication. The chain is Non-structural protein 1 (1C) from Mus musculus (Mouse).